A 165-amino-acid polypeptide reads, in one-letter code: Nucleotide-binding protein MXAN_1478 (165 aa).

The protein belongs to the YajQ family.

Its function is as follows. Nucleotide-binding protein. The sequence is that of Nucleotide-binding protein MXAN_1478 from Myxococcus xanthus (strain DK1622).